A 310-amino-acid chain; its full sequence is tRNA-cytidine(32) 2-sulfurtransferase (310 aa).

A PP-loop motif motif is present at residues 45-50; the sequence is SGGKDS. Residues C120, C123, and C211 each contribute to the [4Fe-4S] cluster site.

Belongs to the TtcA family. In terms of assembly, homodimer. Mg(2+) serves as cofactor. The cofactor is [4Fe-4S] cluster.

Its subcellular location is the cytoplasm. It carries out the reaction cytidine(32) in tRNA + S-sulfanyl-L-cysteinyl-[cysteine desulfurase] + AH2 + ATP = 2-thiocytidine(32) in tRNA + L-cysteinyl-[cysteine desulfurase] + A + AMP + diphosphate + H(+). It functions in the pathway tRNA modification. In terms of biological role, catalyzes the ATP-dependent 2-thiolation of cytidine in position 32 of tRNA, to form 2-thiocytidine (s(2)C32). The sulfur atoms are provided by the cysteine/cysteine desulfurase (IscS) system. This is tRNA-cytidine(32) 2-sulfurtransferase from Shewanella baltica (strain OS185).